We begin with the raw amino-acid sequence, 259 residues long: Short-chain dehydrogenase reductase 5 (259 aa).

Ile12–Val36 contributes to the NAD(+) binding site. Ser144 is a binding site for substrate. Tyr157 serves as the catalytic Proton acceptor.

It belongs to the short-chain dehydrogenases/reductases (SDR) family.

This chain is Short-chain dehydrogenase reductase 5 (SDR5), found in Arabidopsis thaliana (Mouse-ear cress).